Consider the following 192-residue polypeptide: Ciliary microtubule-associated protein 3 (192 aa).

In terms of assembly, interacts with proteins involved in ciliary transport, including ARL13B, CETN1, KIF3A, RAB6A, RAB8A, TUBB1 and TUBG1. Interacts with AURKA.

It is found in the cytoplasmic vesicle. The protein resides in the golgi apparatus. Its subcellular location is the trans-Golgi network. It localises to the cytoplasm. During primary cilia disassembly, involved in cilia disassembly. Required specifically to control cilia retraction as well as the liberation and duplication of the basal body/centrosome. May act by stimulating AURKA activity at the basal body in a cell cycle-dependent manner. The chain is Ciliary microtubule-associated protein 3 (CIMAP3) from Bos taurus (Bovine).